Consider the following 892-residue polypeptide: UPF0182 protein MCA2716 (892 aa).

The next 7 helical transmembrane spans lie at 7-27 (LLTS…AIVL), 57-77 (ILSG…FWAA), 107-127 (GALP…ALPF), 163-183 (ILVL…VMVA), 206-226 (IHLN…YVLQ), 252-272 (LPLI…ALWF), and 281-301 (LALT…IDVV).

It belongs to the UPF0182 family.

The protein localises to the cell membrane. The chain is UPF0182 protein MCA2716 from Methylococcus capsulatus (strain ATCC 33009 / NCIMB 11132 / Bath).